Consider the following 225-residue polypeptide: Zinc finger protein 22 (225 aa).

Positions 1–35 are disordered; sequence MRLGKPKGGISRSSSQGKVYENQRKTGRQRQRWGM. Lysine 18 carries the N6-acetyllysine modification. 5 C2H2-type zinc fingers span residues 55-77, 83-105, 111-133, 139-161, and 167-189; these read YKCV…QKIH, HKCA…RRVH, YRCD…QRIH, YQCD…QRTH, and YQCS…TKVH. A disordered region spans residues 183-225; that stretch reads RQHTKVHEEEKPRKTRGRSLRAKTHSLSSWKAGKGRRSAAGLR. Residues 195–206 are compositionally biased toward basic residues; that stretch reads RKTRGRSLRAKT.

The protein belongs to the krueppel C2H2-type zinc-finger protein family.

The protein localises to the nucleus. Its function is as follows. Binds DNA through the consensus sequence 5'-CAATG-3'. May be involved in transcriptional regulation and may play a role in tooth formation. This chain is Zinc finger protein 22 (ZNF22), found in Bos taurus (Bovine).